Consider the following 282-residue polypeptide: 2-dehydro-3-deoxyphosphooctonate aldolase (282 aa).

It belongs to the KdsA family.

The protein localises to the cytoplasm. It carries out the reaction D-arabinose 5-phosphate + phosphoenolpyruvate + H2O = 3-deoxy-alpha-D-manno-2-octulosonate-8-phosphate + phosphate. It functions in the pathway carbohydrate biosynthesis; 3-deoxy-D-manno-octulosonate biosynthesis; 3-deoxy-D-manno-octulosonate from D-ribulose 5-phosphate: step 2/3. It participates in bacterial outer membrane biogenesis; lipopolysaccharide biosynthesis. The protein is 2-dehydro-3-deoxyphosphooctonate aldolase of Shewanella amazonensis (strain ATCC BAA-1098 / SB2B).